Here is a 449-residue protein sequence, read N- to C-terminus: Glutamyl-tRNA reductase (449 aa).

Substrate contacts are provided by residues 58 to 61 (TCNR), Ser-121, 126 to 128 (ETQ), and Gln-132. The active-site Nucleophile is the Cys-59. 203-208 (GLGEMA) serves as a coordination point for NADP(+).

This sequence belongs to the glutamyl-tRNA reductase family. Homodimer.

The catalysed reaction is (S)-4-amino-5-oxopentanoate + tRNA(Glu) + NADP(+) = L-glutamyl-tRNA(Glu) + NADPH + H(+). It participates in porphyrin-containing compound metabolism; protoporphyrin-IX biosynthesis; 5-aminolevulinate from L-glutamyl-tRNA(Glu): step 1/2. In terms of biological role, catalyzes the NADPH-dependent reduction of glutamyl-tRNA(Glu) to glutamate 1-semialdehyde (GSA). The sequence is that of Glutamyl-tRNA reductase from Helicobacter pylori (strain HPAG1).